Consider the following 515-residue polypeptide: Histidine ammonia-lyase (515 aa).

Residues 142–144 constitute a cross-link (5-imidazolinone (Ala-Gly)); sequence ASG. Ser143 is modified (2,3-didehydroalanine (Ser)).

It belongs to the PAL/histidase family. Post-translationally, contains an active site 4-methylidene-imidazol-5-one (MIO), which is formed autocatalytically by cyclization and dehydration of residues Ala-Ser-Gly.

The protein resides in the cytoplasm. The enzyme catalyses L-histidine = trans-urocanate + NH4(+). It participates in amino-acid degradation; L-histidine degradation into L-glutamate; N-formimidoyl-L-glutamate from L-histidine: step 1/3. The protein is Histidine ammonia-lyase of Bradyrhizobium sp. (strain BTAi1 / ATCC BAA-1182).